Reading from the N-terminus, the 927-residue chain is SPX and EXS domain-containing protein 5 (927 aa).

Residues 1 to 460 (MKFGKYLESQ…GLSIGSQVMS (460 aa)) enclose the SPX domain. Disordered stretches follow at residues 54-78 (KINS…SSSN), 204-239 (KKNK…QHLQ), 257-305 (PIKS…DQDP), and 326-355 (SDNC…GGNN). Composition is skewed to low complexity over residues 60-78 (PSPT…SSSN) and 208-224 (LNNN…NNNN). A compositionally biased stretch (polar residues) spans 257–270 (PIKSTPLSPKQQDG). Over residues 286–299 (LEEEEEEEEEEDDN) the composition is skewed to acidic residues. 8 helical membrane passes run 516-536 (FFSG…YYFI), 553-573 (VYSA…DCWV), 597-617 (IFQA…VYMW), 636-656 (PLVL…IFQL), 682-702 (FFMG…AQFV), 769-789 (LSIV…DSGW), 845-862 (FVYY…TTWT), and 869-889 (QLTN…IEIL). The region spanning 717 to 927 (GCIRYARYFN…LPYQIRDNEN (211 aa)) is the EXS domain.

The protein belongs to the SYG1 (TC 2.A.94) family.

The protein resides in the membrane. The sequence is that of SPX and EXS domain-containing protein 5 from Dictyostelium discoideum (Social amoeba).